Here is a 279-residue protein sequence, read N- to C-terminus: Thioredoxin-like 1-2, chloroplastic (279 aa).

A chloroplast-targeting transit peptide spans 1-34 (MAATAAQAVAVKGSVAVPPCGSRGRRRGAVASVR). Residues 61–203 (PRRSRPVPRN…FRDALAKHKP (143 aa)) enclose the Thioredoxin domain. Active-site nucleophile residues include cysteine 126 and cysteine 129. Residues cysteine 126 and cysteine 129 are joined by a disulfide bond. Residues 242-279 (GDAAAAQELDRGSTKLSPPAKPLVKQGSEERSLVSSGR) form a disordered region.

Belongs to the thioredoxin family.

It is found in the plastid. The protein localises to the chloroplast. Probable thiol-disulfide oxidoreductase that may participate in various redox reactions. This is Thioredoxin-like 1-2, chloroplastic from Oryza sativa subsp. japonica (Rice).